The following is a 316-amino-acid chain: Ribosomal protein L11 methyltransferase (316 aa).

4 residues coordinate S-adenosyl-L-methionine: threonine 157, glycine 178, aspartate 200, and asparagine 243.

Belongs to the methyltransferase superfamily. PrmA family.

The protein localises to the cytoplasm. It catalyses the reaction L-lysyl-[protein] + 3 S-adenosyl-L-methionine = N(6),N(6),N(6)-trimethyl-L-lysyl-[protein] + 3 S-adenosyl-L-homocysteine + 3 H(+). Functionally, methylates ribosomal protein L11. The sequence is that of Ribosomal protein L11 methyltransferase from Streptococcus pneumoniae (strain JJA).